We begin with the raw amino-acid sequence, 266 residues long: Small ribosomal subunit protein uS2 (266 aa).

Positions 233–266 are disordered; it reads AVREEEFASAPDAGKKGRQAQPKKGKRASDAAAE. Over residues 248–258 the composition is skewed to basic residues; the sequence is KGRQAQPKKGK.

This sequence belongs to the universal ribosomal protein uS2 family.

This Xylella fastidiosa (strain M23) protein is Small ribosomal subunit protein uS2.